Consider the following 471-residue polypeptide: A-type ATP synthase subunit B (471 aa).

This sequence belongs to the ATPase alpha/beta chains family. In terms of assembly, has multiple subunits with at least A(3), B(3), C, D, E, F, H, I and proteolipid K(x).

The protein resides in the cell membrane. Functionally, component of the A-type ATP synthase that produces ATP from ADP in the presence of a proton gradient across the membrane. The B chain is a regulatory subunit. The sequence is that of A-type ATP synthase subunit B from Natronomonas pharaonis (strain ATCC 35678 / DSM 2160 / CIP 103997 / JCM 8858 / NBRC 14720 / NCIMB 2260 / Gabara) (Halobacterium pharaonis).